A 251-amino-acid polypeptide reads, in one-letter code: Zinc import ATP-binding protein ZnuC (251 aa).

The 216-residue stretch at 5–220 folds into the ABC transporter domain; it reads VSLENVSVSF…PEFISMFGPR (216 aa). Residue 37-44 coordinates ATP; it reads GPNGAGKS.

The protein belongs to the ABC transporter superfamily. Zinc importer (TC 3.A.1.15.5) family. As to quaternary structure, the complex is composed of two ATP-binding proteins (ZnuC), two transmembrane proteins (ZnuB) and a solute-binding protein (ZnuA).

Its subcellular location is the cell inner membrane. The catalysed reaction is Zn(2+)(out) + ATP(in) + H2O(in) = Zn(2+)(in) + ADP(in) + phosphate(in) + H(+)(in). Its function is as follows. Part of the ABC transporter complex ZnuABC involved in zinc import. Responsible for energy coupling to the transport system. This is Zinc import ATP-binding protein ZnuC from Salmonella typhi.